A 540-amino-acid polypeptide reads, in one-letter code: Glucose-6-phosphate isomerase (540 aa).

Catalysis depends on glutamate 346, which acts as the Proton donor. Active-site residues include histidine 377 and lysine 505.

It belongs to the GPI family.

It localises to the cytoplasm. It catalyses the reaction alpha-D-glucose 6-phosphate = beta-D-fructose 6-phosphate. Its pathway is carbohydrate biosynthesis; gluconeogenesis. The protein operates within carbohydrate degradation; glycolysis; D-glyceraldehyde 3-phosphate and glycerone phosphate from D-glucose: step 2/4. Catalyzes the reversible isomerization of glucose-6-phosphate to fructose-6-phosphate. The protein is Glucose-6-phosphate isomerase of Francisella tularensis subsp. holarctica (strain FTNF002-00 / FTA).